A 100-amino-acid polypeptide reads, in one-letter code: NAD(P)H-quinone oxidoreductase subunit 4L, chloroplastic (100 aa).

3 helical membrane passes run 1–21 (MLEN…YGLT), 30–50 (LMCL…FSSF), and 60–80 (VFAI…LAII).

The protein belongs to the complex I subunit 4L family. In terms of assembly, NDH is composed of at least 16 different subunits, 5 of which are encoded in the nucleus.

The protein localises to the plastid. Its subcellular location is the chloroplast thylakoid membrane. The catalysed reaction is a plastoquinone + NADH + (n+1) H(+)(in) = a plastoquinol + NAD(+) + n H(+)(out). It catalyses the reaction a plastoquinone + NADPH + (n+1) H(+)(in) = a plastoquinol + NADP(+) + n H(+)(out). NDH shuttles electrons from NAD(P)H:plastoquinone, via FMN and iron-sulfur (Fe-S) centers, to quinones in the photosynthetic chain and possibly in a chloroplast respiratory chain. The immediate electron acceptor for the enzyme in this species is believed to be plastoquinone. Couples the redox reaction to proton translocation, and thus conserves the redox energy in a proton gradient. The sequence is that of NAD(P)H-quinone oxidoreductase subunit 4L, chloroplastic from Staurastrum punctulatum (Green alga).